Here is a 106-residue protein sequence, read N- to C-terminus: Large ribosomal subunit protein uL30 (106 aa).

It belongs to the universal ribosomal protein uL30 family. In terms of assembly, part of the 50S ribosomal subunit.

The polypeptide is Large ribosomal subunit protein uL30 (Ruthia magnifica subsp. Calyptogena magnifica).